The following is a 119-amino-acid chain: Beta-2-microglobulin (119 aa).

A signal peptide spans 1–20 (MARFVVVALLALLSLSGLEA). An Ig-like C1-type domain is found at 25 to 114 (PKIQVYSRHP…VTFPTPKTVK (90 aa)). Cys45 and Cys100 are disulfide-bonded.

This sequence belongs to the beta-2-microglobulin family. Heterodimer of an alpha chain and a beta chain. Beta-2-microglobulin is the beta-chain of major histocompatibility complex class I molecules.

The protein localises to the secreted. Component of the class I major histocompatibility complex (MHC). Involved in the presentation of peptide antigens to the immune system. The polypeptide is Beta-2-microglobulin (B2M) (Alouatta seniculus (Red howler monkey)).